We begin with the raw amino-acid sequence, 311 residues long: tRNA dimethylallyltransferase 2 (311 aa).

Gly-15 to Thr-22 serves as a coordination point for ATP. Thr-17–Thr-22 contributes to the substrate binding site. Residues Asp-40–Gln-43 are interaction with substrate tRNA.

Belongs to the IPP transferase family. In terms of assembly, monomer. It depends on Mg(2+) as a cofactor.

The catalysed reaction is adenosine(37) in tRNA + dimethylallyl diphosphate = N(6)-dimethylallyladenosine(37) in tRNA + diphosphate. Catalyzes the transfer of a dimethylallyl group onto the adenine at position 37 in tRNAs that read codons beginning with uridine, leading to the formation of N6-(dimethylallyl)adenosine (i(6)A). This Syntrophus aciditrophicus (strain SB) protein is tRNA dimethylallyltransferase 2.